The primary structure comprises 264 residues: Zearalenone hydrolase (264 aa).

The AB hydrolase-1 domain occupies 27–207; that stretch reads VLVPDGLGEC…KDLEALRGKP (181 aa). The zearalenone site is built by Gly-32, Ser-102, and Ser-103. Ser-102 is a catalytic residue. The active site involves Glu-126. 4 residues coordinate zearalenone: Trp-183, Tyr-187, Ser-220, and His-242. His-242 is a catalytic residue.

This sequence belongs to the AB hydrolase superfamily. Hydrolase RutD family. Homodimer.

The catalysed reaction is zearalenone + H2O = hydrolyzed zearalenone + H(+). Functionally, lactonohydrolase that specifically hydrolyzes and deactivates the mycotoxin zearalenone (ZEN) and its zearalenol (ZOL) derivatives. ZHD101 prefers ZEN to ZOL as its substrate, but ZOL, especially the alpha-form, shows higher estrogenic toxicity than ZEN. This chain is Zearalenone hydrolase, found in Bionectria ochroleuca (Gliocladium roseum).